Here is a 238-residue protein sequence, read N- to C-terminus: Adapter protein MecA (238 aa).

Residues E108–A133 form a disordered region.

Belongs to the MecA family. As to quaternary structure, homodimer.

Enables the recognition and targeting of unfolded and aggregated proteins to the ClpC protease or to other proteins involved in proteolysis. The polypeptide is Adapter protein MecA (Staphylococcus carnosus (strain TM300)).